A 122-amino-acid polypeptide reads, in one-letter code: Modulator protein MzrA (122 aa).

Residues 1–10 (MKILTRIPRR) are Cytoplasmic-facing. Residues 11–31 (LLPWLLGGALALVAVSFAPAL) form a helical membrane-spanning segment. Residues 32–122 (LSHETVVQIR…NQDANRSIYS (91 aa)) lie on the Periplasmic side of the membrane.

This sequence belongs to the MzrA family. In terms of assembly, interacts with EnvZ.

Its subcellular location is the cell inner membrane. Its function is as follows. Modulates the activity of the EnvZ/OmpR two-component regulatory system, probably by directly modulating EnvZ enzymatic activity and increasing stability of phosphorylated OmpR. The chain is Modulator protein MzrA from Pantoea sp. (strain At-9b).